The primary structure comprises 96 residues: Small ribosomal subunit protein bS6 (96 aa).

The protein belongs to the bacterial ribosomal protein bS6 family.

Its function is as follows. Binds together with bS18 to 16S ribosomal RNA. The polypeptide is Small ribosomal subunit protein bS6 (Streptococcus equi subsp. equi (strain 4047)).